We begin with the raw amino-acid sequence, 81 residues long: Defensin-like protein 43 (81 aa).

Residues M1 to A27 form the signal peptide. Cystine bridges form between C40-C79, C44-C67, C53-C77, and C57-C78.

This sequence belongs to the DEFL family.

The protein localises to the secreted. This Arabidopsis thaliana (Mouse-ear cress) protein is Defensin-like protein 43.